Reading from the N-terminus, the 826-residue chain is Outer membrane usher protein YehB (826 aa).

The first 22 residues, 1–22, serve as a signal peptide directing secretion; that stretch reads MLRMTPLASAIVALLLGIEAYA. Cysteines 809 and 825 form a disulfide.

It belongs to the fimbrial export usher family.

The protein localises to the cell outer membrane. In terms of biological role, part of the yehABCD fimbrial operon. Could contribute to adhesion to various surfaces in specific environmental niches. Probably involved in the export and assembly of fimbrial subunits across the outer membrane. The polypeptide is Outer membrane usher protein YehB (yehB) (Escherichia coli (strain K12)).